A 297-amino-acid polypeptide reads, in one-letter code: MSWQQVAIDADSRIAERFADTLMELGALSTAIEDAAAGTEFEQPIFGEPGEPVDRLWEQSRIIVLFAADADVAMLIAAAAGEAGMPTPVYTVEAVESQDWVRLTQSQFDPIRISGRLWITPTWHDAPDANAINLALDPGLAFGTGSHPTTRLCLQWLDANICGGESVLDYGCGSGILAIAAIKLGATDVTGIDIDPQAVQASRDNAVQNQVTAAFGLPDTLEDGRQFDVLVANILANPLRMLGDLLASHVRAGGRIVLSGILEEQAQELSELYSAWFEMDPPVFDEGWTRLSGVRRA.

Residues Thr-150, Gly-171, Asp-193, and Asn-233 each contribute to the S-adenosyl-L-methionine site.

The protein belongs to the methyltransferase superfamily. PrmA family.

The protein resides in the cytoplasm. The catalysed reaction is L-lysyl-[protein] + 3 S-adenosyl-L-methionine = N(6),N(6),N(6)-trimethyl-L-lysyl-[protein] + 3 S-adenosyl-L-homocysteine + 3 H(+). Methylates ribosomal protein L11. This Laribacter hongkongensis (strain HLHK9) protein is Ribosomal protein L11 methyltransferase.